The sequence spans 439 residues: MSKTMAMNLLEDWCRGMEVDIHRSLLVTGIPEDCGQAEIEETLNGVLAPLGPYRVLNKIFVREENVKAALIEVGEGVNLSTIPREFPGRGGVWRVVCRDPTQDAEFLKNLNEFLDAEGRTWEDVVRLLQLNHPTLSQNQHQPPENWAEALGVLLGAVVQIIFCMDAEIRSREEARAQEAAEFEEMAAWALAAGKKVKKEPGLAAEVGSALKAETPNNWNATEDQHDPPKPLVRRAGAKSRSRRKKQKKNPKQEAVPWKKPKGINSSSTANLEDPEVGDAESMAISEPIKGSRKPCVKQEELALKKPMAKCAWKGPREPPQDAQAEAESPGGASESDQDGGHESPPKKKAMAWVSAKNPAPMRKKKKVSLGPVSYVLVDSEDGRKKPVMPKKGPGSRREASVQKAPQGQQPAEATASTSRGPRAKPEGSPRRATNESRKV.

The disordered stretch occupies residues 213–439; the sequence is ETPNNWNATE…RRATNESRKV (227 aa). Residues 231-249 are compositionally biased toward basic residues; the sequence is LVRRAGAKSRSRRKKQKKN. Residues 403-419 are compositionally biased toward polar residues; it reads KAPQGQQPAEATASTSR. Positions 423–439 are enriched in basic and acidic residues; sequence AKPEGSPRRATNESRKV.

Belongs to the PNMA family.

The protein is Paraneoplastic antigen-like protein 8A (PNMA8A) of Pongo abelii (Sumatran orangutan).